A 481-amino-acid polypeptide reads, in one-letter code: 2-methylisoborneol synthase (481 aa).

2 disordered regions span residues 1-125 and 139-160; these read MPDS…PVGP and QAAVPPDAVPAPSGPSAEGPVV. The span at 11–23 shows a compositional bias: pro residues; sequence TSLPEQPPAPPAT. Residues 24-33 are compositionally biased toward low complexity; that stretch reads APDAPAATVT. Composition is skewed to pro residues over residues 52–64 and 71–104; these read VTRPSSPPSPSMP and SSPPSSSMPPASWAPPSPLSPPAPSLPPTSPPAT. Residues 105–114 are compositionally biased toward low complexity; the sequence is APETSAATGS. Mg(2+) is bound by residues D238, D239, E243, N386, S390, and E394.

This sequence belongs to the terpene synthase family. 2-methylisoborneol synthase subfamily. It depends on Mg(2+) as a cofactor.

The enzyme catalyses (E)-2-methylgeranyl diphosphate + H2O = 2-methylisoborneol + diphosphate. Catalyzes the cyclization of 2-methylgeranyl diphosphate (2-MeGPP) to 2-methylisoborneol (2-MIB), which likely involves the intermediacy of 2-methyllinalyl diphosphate. The protein is 2-methylisoborneol synthase (tpc) of Streptomyces lasalocidi (Streptomyces lasaliensis).